A 238-amino-acid chain; its full sequence is MTPHINAPEGAFADVVLMPGDPLRAKYIAETFLQDVVEVTNVRNMLGFTGTYKGRKISIMGHGMGIPSCSIYAKELITEYGVKKIIRVGSCGSVRMDVKVRDVIIGLGACTDSKVNRIRFKDNDFAAIADFDMAQAAVQAAKAKGKAVRVGNLFSADLFYTPDVEMFDVMEKYGILGVEMEAAGIYGVAAEYSAKALTICTVSDHIRTHEQTTAEERQLTFNDMIEIALDSVLIGDAQ.

His-4 contacts a purine D-ribonucleoside. Phosphate-binding positions include Gly-20, Arg-24, Arg-43, and 87-90 (RVGS). A purine D-ribonucleoside contacts are provided by residues 179 to 181 (EME) and 203 to 204 (SD). Catalysis depends on Asp-204, which acts as the Proton donor.

Belongs to the PNP/UDP phosphorylase family. As to quaternary structure, homohexamer; trimer of homodimers.

The catalysed reaction is a purine D-ribonucleoside + phosphate = a purine nucleobase + alpha-D-ribose 1-phosphate. It carries out the reaction a purine 2'-deoxy-D-ribonucleoside + phosphate = a purine nucleobase + 2-deoxy-alpha-D-ribose 1-phosphate. Functionally, catalyzes the reversible phosphorolytic breakdown of the N-glycosidic bond in the beta-(deoxy)ribonucleoside molecules, with the formation of the corresponding free purine bases and pentose-1-phosphate. This chain is Purine nucleoside phosphorylase DeoD-type, found in Haemophilus influenzae (strain PittEE).